Consider the following 60-residue polypeptide: MRIHYLLFTFLLVLLSPLAAFSQKINEPVSCIRNGGICQYRCIGLRHKIGTCGSPFKCCK.

An N-terminal signal peptide occupies residues 1–22; the sequence is MRIHYLLFTFLLVLLSPLAAFS. Residues 23–25 constitute a propeptide that is removed on maturation; the sequence is QKI. Intrachain disulfides connect Cys31–Cys58, Cys38–Cys52, and Cys42–Cys59.

The protein belongs to the beta-defensin family. In terms of tissue distribution, most highly expressed in testis and heart.

Its subcellular location is the secreted. In terms of biological role, a synthetic peptide displays antimicrobial activities against S.aureus, P.aeruginosa, E.coli and B.cepacia. The antimicrobial activity against S.aureus, E.coli and B.cepacia is reduced in raised concentration of NaCl, but its action against P.aeruginosa is independent of NaCl concentration. The sequence is that of Beta-defensin 8 (Defb8) from Mus musculus (Mouse).